The following is an 871-amino-acid chain: Valine--tRNA ligase (871 aa).

Residues 47–57 (PNVTGRLHIGH) carry the 'HIGH' region motif. The 'KMSKS' region motif lies at 534–538 (KMSKS). Lys-537 lines the ATP pocket. Residues 805-871 (DLTPILNRLN…IEEELARLTR (67 aa)) are a coiled coil.

It belongs to the class-I aminoacyl-tRNA synthetase family. ValS type 1 subfamily. In terms of assembly, monomer.

It is found in the cytoplasm. It carries out the reaction tRNA(Val) + L-valine + ATP = L-valyl-tRNA(Val) + AMP + diphosphate. Catalyzes the attachment of valine to tRNA(Val). As ValRS can inadvertently accommodate and process structurally similar amino acids such as threonine, to avoid such errors, it has a 'posttransfer' editing activity that hydrolyzes mischarged Thr-tRNA(Val) in a tRNA-dependent manner. In Nitratiruptor sp. (strain SB155-2), this protein is Valine--tRNA ligase.